Reading from the N-terminus, the 344-residue chain is Glycerol-3-phosphate dehydrogenase [NAD(P)+] (344 aa).

Residues tryptophan 18, histidine 38, and lysine 115 each contribute to the NADPH site. The sn-glycerol 3-phosphate site is built by lysine 115, glycine 144, and threonine 146. An NADPH-binding site is contributed by alanine 148. Positions 199, 252, 262, 263, and 264 each coordinate sn-glycerol 3-phosphate. Catalysis depends on lysine 199, which acts as the Proton acceptor. Arginine 263 lines the NADPH pocket. Residues valine 288 and glutamate 290 each contribute to the NADPH site.

The protein belongs to the NAD-dependent glycerol-3-phosphate dehydrogenase family.

It localises to the cytoplasm. The catalysed reaction is sn-glycerol 3-phosphate + NAD(+) = dihydroxyacetone phosphate + NADH + H(+). It catalyses the reaction sn-glycerol 3-phosphate + NADP(+) = dihydroxyacetone phosphate + NADPH + H(+). It functions in the pathway membrane lipid metabolism; glycerophospholipid metabolism. Functionally, catalyzes the reduction of the glycolytic intermediate dihydroxyacetone phosphate (DHAP) to sn-glycerol 3-phosphate (G3P), the key precursor for phospholipid synthesis. This Hydrogenovibrio crunogenus (strain DSM 25203 / XCL-2) (Thiomicrospira crunogena) protein is Glycerol-3-phosphate dehydrogenase [NAD(P)+].